The chain runs to 343 residues: Ribosomal RNA small subunit methyltransferase C (343 aa).

It belongs to the methyltransferase superfamily. RsmC family. Monomer.

Its subcellular location is the cytoplasm. The catalysed reaction is guanosine(1207) in 16S rRNA + S-adenosyl-L-methionine = N(2)-methylguanosine(1207) in 16S rRNA + S-adenosyl-L-homocysteine + H(+). Specifically methylates the guanine in position 1207 of 16S rRNA in the 30S particle. In Pseudoalteromonas atlantica (strain T6c / ATCC BAA-1087), this protein is Ribosomal RNA small subunit methyltransferase C.